The primary structure comprises 354 residues: MALTTPSGKLIPELQFKAHHFIDKTTVLYGPSKTGKTVYVKHIMKILQPHIEQILVVAPSEPSNRSYEGFVHPTLIHYRLWLADKQKKNDNKGAERFLEAIWQRQTMMSSIYSRVNNIDMLKTLYHKLPIDIQQKENKNIAKVECLKAEQTDQKKEEKITSLYQQLLKKIIIQNIHMYKNLSLTEDEKFTLNYINLNPRLLLILDDCAAELHPLFTKEIFKKFFYQNRHCFISMIICCQDDTDLPANLRKNAFVSIFTNASICMSNFSRQSNRYSKQDKEYVEEISHIVFKGYRKLVYIREDEYRQHFYHSTVPLPTAFSFGSKALLKLCKAVYSKEVVIDKSNPYWSKFRLNF.

It belongs to the asfivirus B354L family.

This is an uncharacterized protein from Ornithodoros (relapsing fever ticks).